Reading from the N-terminus, the 474-residue chain is Methylenetetrahydrofolate--tRNA-(uracil-5-)-methyltransferase TrmFO (474 aa).

9–14 is a binding site for FAD; the sequence is GGGLAG. The interval 425-451 is disordered; that stretch reads PPLERMPRNETGKRLRGPEKAALKKRA. The span at 429-451 shows a compositional bias: basic and acidic residues; that stretch reads RMPRNETGKRLRGPEKAALKKRA.

Belongs to the MnmG family. TrmFO subfamily. The cofactor is FAD.

It is found in the cytoplasm. The enzyme catalyses uridine(54) in tRNA + (6R)-5,10-methylene-5,6,7,8-tetrahydrofolate + NADH + H(+) = 5-methyluridine(54) in tRNA + (6S)-5,6,7,8-tetrahydrofolate + NAD(+). It carries out the reaction uridine(54) in tRNA + (6R)-5,10-methylene-5,6,7,8-tetrahydrofolate + NADPH + H(+) = 5-methyluridine(54) in tRNA + (6S)-5,6,7,8-tetrahydrofolate + NADP(+). In terms of biological role, catalyzes the folate-dependent formation of 5-methyl-uridine at position 54 (M-5-U54) in all tRNAs. This is Methylenetetrahydrofolate--tRNA-(uracil-5-)-methyltransferase TrmFO from Methylorubrum populi (strain ATCC BAA-705 / NCIMB 13946 / BJ001) (Methylobacterium populi).